Here is a 244-residue protein sequence, read N- to C-terminus: 1-(5-phosphoribosyl)-5-[(5-phosphoribosylamino)methylideneamino] imidazole-4-carboxamide isomerase (244 aa).

D9 serves as the catalytic Proton acceptor. D131 (proton donor) is an active-site residue.

This sequence belongs to the HisA/HisF family.

It localises to the cytoplasm. It catalyses the reaction 1-(5-phospho-beta-D-ribosyl)-5-[(5-phospho-beta-D-ribosylamino)methylideneamino]imidazole-4-carboxamide = 5-[(5-phospho-1-deoxy-D-ribulos-1-ylimino)methylamino]-1-(5-phospho-beta-D-ribosyl)imidazole-4-carboxamide. Its pathway is amino-acid biosynthesis; L-histidine biosynthesis; L-histidine from 5-phospho-alpha-D-ribose 1-diphosphate: step 4/9. In Campylobacter jejuni subsp. jejuni serotype O:6 (strain 81116 / NCTC 11828), this protein is 1-(5-phosphoribosyl)-5-[(5-phosphoribosylamino)methylideneamino] imidazole-4-carboxamide isomerase.